A 930-amino-acid polypeptide reads, in one-letter code: Isoleucine--tRNA ligase (930 aa).

The short motif at 57–67 (PYANGNIHVGH) is the 'HIGH' region element. Glu-554 is an L-isoleucyl-5'-AMP binding site. A 'KMSKS' region motif is present at residues 595–599 (KMSKS). Residue Lys-598 coordinates ATP. Residues Cys-888, Cys-891, Cys-908, and Cys-911 each contribute to the Zn(2+) site.

The protein belongs to the class-I aminoacyl-tRNA synthetase family. IleS type 1 subfamily. Monomer. It depends on Zn(2+) as a cofactor.

Its subcellular location is the cytoplasm. It catalyses the reaction tRNA(Ile) + L-isoleucine + ATP = L-isoleucyl-tRNA(Ile) + AMP + diphosphate. Its function is as follows. Catalyzes the attachment of isoleucine to tRNA(Ile). As IleRS can inadvertently accommodate and process structurally similar amino acids such as valine, to avoid such errors it has two additional distinct tRNA(Ile)-dependent editing activities. One activity is designated as 'pretransfer' editing and involves the hydrolysis of activated Val-AMP. The other activity is designated 'posttransfer' editing and involves deacylation of mischarged Val-tRNA(Ile). In Streptococcus pneumoniae (strain P1031), this protein is Isoleucine--tRNA ligase.